The following is a 458-amino-acid chain: Argininosuccinate lyase (458 aa).

It belongs to the lyase 1 family. Argininosuccinate lyase subfamily.

The protein localises to the cytoplasm. It catalyses the reaction 2-(N(omega)-L-arginino)succinate = fumarate + L-arginine. The protein operates within amino-acid biosynthesis; L-arginine biosynthesis; L-arginine from L-ornithine and carbamoyl phosphate: step 3/3. The sequence is that of Argininosuccinate lyase from Pseudoalteromonas atlantica (strain T6c / ATCC BAA-1087).